A 584-amino-acid chain; its full sequence is Probable terpene synthase 9 (584 aa).

Mg(2+)-binding residues include D339, D343, and E491. Residues 339–343 (DDMYD) carry the DDXXD motif motif.

Belongs to the terpene synthase family. Requires Mg(2+) as cofactor.

Functionally, probable sesquiterpene synthase. This is Probable terpene synthase 9 (TPS9) from Ricinus communis (Castor bean).